The following is a 195-amino-acid chain: SPI-2 type 3 secretion system translocon protein SctB (195 aa).

A coiled-coil region spans residues 44 to 80 (KLMELAKKLRDIMRSYNVEKQRLAWELQVNVLQTQMK). 3 helical membrane-spanning segments follow: residues 90-110 (MITAGGAMLSGVLTIGLGAVG), 115-135 (LIAGQAVGHTAGGVMGLGAGV), and 170-190 (EIMQQIIGVGSSLVTVLAEIL).

This sequence belongs to the SctB/EspB family. The core secretion machinery of the T3SS is composed of approximately 20 different proteins, including cytoplasmic components, a base, an export apparatus and a needle. This subunit is involved in the formation of a pore, called the translocon, in host membrane. May form a complex with SseB and SseC/SctE2. SseB is required for correct localization of SseD/SctB2 on the bacterial cell surface. Binds to the chaperone SseA.

The protein resides in the secreted. Its subcellular location is the cell surface. The protein localises to the host membrane. Its function is as follows. Component of the type III secretion system 2 (SPI-2 T3SS), also called injectisome, which is used to inject bacterial effector proteins into eukaryotic host cells. SseC/SctE2 and SseD/SctB2 are inserted into the host membrane where they form a pore and allow the translocation of effector proteins into the cytosol of target cells. In terms of biological role, required for the translocation of SPI-2 effector proteins. Required for systemic Salmonella infection of the mouse. Essential for SpvB-induced actin depolymerization in the host cell cytoplasm. In Salmonella typhimurium (strain LT2 / SGSC1412 / ATCC 700720), this protein is SPI-2 type 3 secretion system translocon protein SctB.